The following is a 39-amino-acid chain: Protein MchX (39 aa).

Residues 15 to 37 traverse the membrane as a helical segment; that stretch reads SALSSTLLLSLIMSATLLEYSLS.

The protein localises to the cell inner membrane. Its function is as follows. Required for microcin H47 production. Possibly involved in a regulatory loop modulating its own expression and that of MchI and MchB. This chain is Protein MchX (mchX), found in Escherichia coli.